A 202-amino-acid polypeptide reads, in one-letter code: ATP-dependent Clp protease proteolytic subunit (202 aa).

Catalysis depends on Ser-101, which acts as the Nucleophile. His-126 is a catalytic residue.

The protein belongs to the peptidase S14 family. As to quaternary structure, component of the chloroplastic Clp protease core complex.

It is found in the plastid. The protein resides in the chloroplast stroma. It catalyses the reaction Hydrolysis of proteins to small peptides in the presence of ATP and magnesium. alpha-casein is the usual test substrate. In the absence of ATP, only oligopeptides shorter than five residues are hydrolyzed (such as succinyl-Leu-Tyr-|-NHMec, and Leu-Tyr-Leu-|-Tyr-Trp, in which cleavage of the -Tyr-|-Leu- and -Tyr-|-Trp bonds also occurs).. Functionally, cleaves peptides in various proteins in a process that requires ATP hydrolysis. Has a chymotrypsin-like activity. Plays a major role in the degradation of misfolded proteins. This Drimys granadensis protein is ATP-dependent Clp protease proteolytic subunit.